Here is a 489-residue protein sequence, read N- to C-terminus: UBX domain-containing protein 7 (489 aa).

The residue at position 2 (Ala2) is an N-acetylalanine. In terms of domain architecture, UBA spans 2–54; that stretch reads AAHGGSAASSALKGLIQQFTTITGASESVGKHMLEACNNNLEMAVTMFLDGGG. Positions 56-77 are disordered; the sequence is AEEPSTSSASVSTVRPHTEEEV. The segment covering 59 to 70 has biased composition (polar residues); it reads PSTSSASVSTVR. Lys84 participates in a covalent cross-link: Glycyl lysine isopeptide (Lys-Gly) (interchain with G-Cter in SUMO2). Lys99 participates in a covalent cross-link: Glycyl lysine isopeptide (Lys-Gly) (interchain with G-Cter in ubiquitin). Residue Lys134 forms a Glycyl lysine isopeptide (Lys-Gly) (interchain with G-Cter in SUMO2) linkage. Phosphoserine is present on residues Ser278, Ser280, Ser285, and Ser288. The 20-residue stretch at 285 to 304 folds into the UIM domain; sequence SEDSQLEAAIRASLQETHFD. A compositionally biased stretch (polar residues) spans 300 to 309; sequence ETHFDSTQTK. The interval 300 to 384 is disordered; it reads ETHFDSTQTK…PGTATNHQGL (85 aa). Thr306 bears the Phosphothreonine mark. Positions 352-366 are enriched in basic and acidic residues; that stretch reads HKDLGHRKEENRRPL. In terms of domain architecture, UBX spans 408 to 485; sequence VNGPKAQLML…GLCPQETVFV (78 aa).

In terms of assembly, interacts with neddylated CUL2, ubiquitinated HIF1A, and VCP/p97.

Its subcellular location is the nucleus. Ubiquitin-binding adapter that links a subset of NEDD8-associated cullin ring ligases (CRLs) to the segregase VCP/p97, to regulate turnover of their ubiquitination substrates. The sequence is that of UBX domain-containing protein 7 (UBXN7) from Homo sapiens (Human).